The chain runs to 279 residues: Tryptophan synthase alpha chain (279 aa).

Catalysis depends on proton acceptor residues E50 and D61.

The protein belongs to the TrpA family. In terms of assembly, tetramer of two alpha and two beta chains.

The enzyme catalyses (1S,2R)-1-C-(indol-3-yl)glycerol 3-phosphate + L-serine = D-glyceraldehyde 3-phosphate + L-tryptophan + H2O. The protein operates within amino-acid biosynthesis; L-tryptophan biosynthesis; L-tryptophan from chorismate: step 5/5. Its function is as follows. The alpha subunit is responsible for the aldol cleavage of indoleglycerol phosphate to indole and glyceraldehyde 3-phosphate. The polypeptide is Tryptophan synthase alpha chain (Methylobacterium radiotolerans (strain ATCC 27329 / DSM 1819 / JCM 2831 / NBRC 15690 / NCIMB 10815 / 0-1)).